The sequence spans 395 residues: MGILGLSKLLYDKSPNAIRERELKSFFGRRIAIDASMSIYQFIIAMKGFQDGQGMELTNEQGDVTSHLNGLFARTLRMIDEGIKPIYVFDGKPPKLKADELETRRQKAAEAEREFEKAKDAGDDEMMEKMSKRTVRVSREQIEESKKLLQLMGVPVIQAPSEAEAQCAELVKKGKAWAVGTEDMDALTFGSTVMLRHLNISDAKKRPIAEIHLDEVLQATGLSMDQFVDLCILLGCDYVPKVPGIGPQRAWEGIQRYGNIESFLESLDAAKHMVPPDFCYREARAFFLNPEVTRAEEIDIRFSEPDEAGLIQFLVKEKLFNPDRVNKGIARLRAALTKKTQGRLDNFFTIVKAPPQAAAPRAPLAGRKRSHDGKCVHVSGTLQKATGGHKKAVRK.

Residues 1-108 (MGILGLSKLL…DELETRRQKA (108 aa)) are N-domain. Asp-34 is a Mg(2+) binding site. Arg-74 contacts DNA. Positions 90, 162, 164, 183, and 185 each coordinate Mg(2+). Residues 126–257 (MMEKMSKRTV…QRAWEGIQRY (132 aa)) are I-domain. Position 162 (Glu-162) interacts with DNA. 2 residues coordinate DNA: Gly-235 and Asp-237. Asp-237 lines the Mg(2+) pocket. An interaction with PCNA region spans residues 340–348 (TQGRLDNFF).

The protein belongs to the XPG/RAD2 endonuclease family. FEN1 subfamily. Interacts with PCNA. Three molecules of FEN1 bind to one PCNA trimer with each molecule binding to one PCNA monomer. PCNA stimulates the nuclease activity without altering cleavage specificity. Mg(2+) serves as cofactor. Phosphorylated. Phosphorylation upon DNA damage induces relocalization to the nuclear plasma.

It is found in the nucleus. The protein localises to the nucleolus. The protein resides in the nucleoplasm. Its subcellular location is the mitochondrion. In terms of biological role, structure-specific nuclease with 5'-flap endonuclease and 5'-3' exonuclease activities involved in DNA replication and repair. During DNA replication, cleaves the 5'-overhanging flap structure that is generated by displacement synthesis when DNA polymerase encounters the 5'-end of a downstream Okazaki fragment. It enters the flap from the 5'-end and then tracks to cleave the flap base, leaving a nick for ligation. Also involved in the long patch base excision repair (LP-BER) pathway, by cleaving within the apurinic/apyrimidinic (AP) site-terminated flap. Acts as a genome stabilization factor that prevents flaps from equilibrating into structures that lead to duplications and deletions. Also possesses 5'-3' exonuclease activity on nicked or gapped double-stranded DNA, and exhibits RNase H activity. Also involved in replication and repair of rDNA and in repairing mitochondrial DNA. The chain is Flap endonuclease 1 from Leishmania braziliensis.